The primary structure comprises 769 residues: 3-O-beta-D-glucopyranosyl-beta-D-glucuronide phosphorylase (769 aa).

Catalysis depends on Asp457, which acts as the Proton donor.

This sequence belongs to the glycosyl hydrolase 94 family. As to quaternary structure, homodimer.

Its subcellular location is the cytoplasm. It carries out the reaction 3-O-beta-D-glucosyl-D-glucuronate + phosphate = aldehydo-D-glucuronate + alpha-D-glucose 1-phosphate. The catalysed reaction is a 3-O-beta-D-glucosyl-beta-D-glucuronoside + phosphate = a beta-D-glucuronoside + alpha-D-glucose 1-phosphate. Glycoside phosphorylase that catalyzes the reversible phosphorolysis of 3-O-beta-D-glucosyl-D-glucuronate into D-glucuronic acid and alpha-D-glucose 1-phosphate. Cannot phosphorolyze cellobionic acid and laminaribiose. In the reverse direction, using alpha-D-glucose 1-phosphate as a donor substrate, the enzyme acts on D-glucuronate and its artificial derivative p-nitrophenyl-beta-D-glucuronide. The apparent catalytic efficiency towards p-nitrophenyl-beta-D-glucuronide is approximately 5-fold higher than that towards D-glucuronic acid. Is probably involved in the metabolism of oligosaccharides containing the 3-O-beta-D-glucopyranosyl-beta-D-glucuronide structure released from bacterial and plant acidic carbohydrates. The polypeptide is 3-O-beta-D-glucopyranosyl-beta-D-glucuronide phosphorylase (Paenibacillus borealis).